A 475-amino-acid polypeptide reads, in one-letter code: Aspartyl/glutamyl-tRNA(Asn/Gln) amidotransferase subunit B (475 aa).

The protein belongs to the GatB/GatE family. GatB subfamily. As to quaternary structure, heterotrimer of A, B and C subunits.

It carries out the reaction L-glutamyl-tRNA(Gln) + L-glutamine + ATP + H2O = L-glutaminyl-tRNA(Gln) + L-glutamate + ADP + phosphate + H(+). It catalyses the reaction L-aspartyl-tRNA(Asn) + L-glutamine + ATP + H2O = L-asparaginyl-tRNA(Asn) + L-glutamate + ADP + phosphate + 2 H(+). Allows the formation of correctly charged Asn-tRNA(Asn) or Gln-tRNA(Gln) through the transamidation of misacylated Asp-tRNA(Asn) or Glu-tRNA(Gln) in organisms which lack either or both of asparaginyl-tRNA or glutaminyl-tRNA synthetases. The reaction takes place in the presence of glutamine and ATP through an activated phospho-Asp-tRNA(Asn) or phospho-Glu-tRNA(Gln). The sequence is that of Aspartyl/glutamyl-tRNA(Asn/Gln) amidotransferase subunit B from Chlorobium chlorochromatii (strain CaD3).